The primary structure comprises 253 residues: Large ribosomal subunit protein mL57 (253 aa).

A mitochondrion-targeting transit peptide spans 1–28 (MENSMMFISRSLRRPVTALNCNLQSVRT).

This sequence belongs to the ribonuclease III family. Mitochondrion-specific ribosomal protein mL57 subfamily. Component of the mitochondrial large ribosomal subunit (mt-LSU). Mature yeast 74S mitochondrial ribosomes consist of a small (37S) and a large (54S) subunit. The 37S small subunit contains a 15S ribosomal RNA (15S mt-rRNA) and 34 different proteins. The 54S large subunit contains a 21S rRNA (21S mt-rRNA) and 46 different proteins. mL57 forms a heterodimer with mL44 and stabilizes rRNA expansion segments 1/2 at a membrane-facing protuberance close to the point of attachment of the ribosome to the translocon in the membrane.

It localises to the mitochondrion. Component of the mitochondrial ribosome (mitoribosome), a dedicated translation machinery responsible for the synthesis of mitochondrial genome-encoded proteins, including at least some of the essential transmembrane subunits of the mitochondrial respiratory chain. The mitoribosomes are attached to the mitochondrial inner membrane and translation products are cotranslationally integrated into the membrane. The polypeptide is Large ribosomal subunit protein mL57 (MRPL15) (Saccharomyces cerevisiae (strain ATCC 204508 / S288c) (Baker's yeast)).